The following is a 20-amino-acid chain: Dahlein-5.3 (20 aa).

In terms of tissue distribution, expressed by the skin dorsal glands.

It is found in the secreted. In terms of biological role, has no antimicrobial activity. Strongly inhibits the formation of NO by neuronal nitric oxide synthase at micromolar concentrations. In Ranoidea dahlii (Dahl's aquatic frog), this protein is Dahlein-5.3.